Reading from the N-terminus, the 113-residue chain is Small ribosomal subunit protein uS17 (113 aa).

The protein belongs to the universal ribosomal protein uS17 family. In terms of assembly, part of the 30S ribosomal subunit.

In terms of biological role, one of the primary rRNA binding proteins, it binds specifically to the 5'-end of 16S ribosomal RNA. The protein is Small ribosomal subunit protein uS17 of Pyrococcus furiosus (strain ATCC 43587 / DSM 3638 / JCM 8422 / Vc1).